The chain runs to 956 residues: Nitrogen regulatory protein NUT1 (956 aa).

Over residues 1–12 (MNPTITEHDFRF) the composition is skewed to basic and acidic residues. Disordered stretches follow at residues 1 to 51 (MNPT…NDAQ), 120 to 222 (QQEE…PAAA), 240 to 262 (KTSI…FQVP), 348 to 373 (GQSI…SQVS), and 524 to 661 (TLPG…DAPT). Positions 15 to 37 (RPAAPGRDPGSDSSDDPLPASLR) are enriched in low complexity. Composition is skewed to polar residues over residues 42 to 51 (DRQSAFNDAQ), 131 to 153 (PLKT…QKKS), 167 to 194 (SHGS…NAIS), and 208 to 217 (AAQSQFNPQS). Polar residues predominate over residues 588 to 613 (NASTTAIPNSQMQYEQQGVQGHTNSP). Low complexity-rich tracts occupy residues 623-633 (SGFSSVVHSRP) and 640-661 (SKNG…DAPT). The segment at 663-687 (CTNCATQTTPLWRRNPEGQPLCNAC) adopts a GATA-type zinc-finger fold. A disordered region spans residues 708 to 890 (KKRNRGSGSN…AATRPSGFGT (183 aa)). The segment covering 713 to 760 (GSGSNVPGATSGSRSKKGATSTAVSGTNTRKNSSLAISRTASTTNVQV) has biased composition (polar residues). Over residues 812-839 (VVPIAAAPPKNMPGPGAAAAARTVALGP) the composition is skewed to low complexity. Polar residues-rich tracts occupy residues 849–863 (SPAN…NANH) and 872–881 (PENSTGSNEA).

It localises to the nucleus. Functionally, major nitrogen regulatory protein; activates expression of nitrogen-regulated genes. The chain is Nitrogen regulatory protein NUT1 (NUT1) from Pyricularia oryzae (strain 70-15 / ATCC MYA-4617 / FGSC 8958) (Rice blast fungus).